A 309-amino-acid polypeptide reads, in one-letter code: MTAAHVAAPEPGQYELSHLRLLEAEAIHIIREVAAEFERPVLLFSGGKDSIVMLHLAIKAFAPARLPFPVMHVDTGHNFDEVISTRDRLVAENGVRLVVASVQEDIDAGRVVDNGPSRNPLQTITLLRAIRENRFDAAFGGARRDEEKARAKERVFSFRDEFGQWDPKAQRPELWNIYNGRHRKGEHIRVFPLSNWTEYDIWAYIGAEGITLPGIYYAHTRPVFQRDGMLLAVHPYMQPRDDEEVFETSVRFRTVGDVTCTGCVESTASTVEDIIAETAVSRLTERGATRADDRISEAGMEDRKREGYF.

This sequence belongs to the PAPS reductase family. CysD subfamily. In terms of assembly, heterodimer composed of CysD, the smaller subunit, and CysN.

It carries out the reaction sulfate + ATP + H(+) = adenosine 5'-phosphosulfate + diphosphate. It functions in the pathway sulfur metabolism; hydrogen sulfide biosynthesis; sulfite from sulfate: step 1/3. Functionally, with CysN forms the ATP sulfurylase (ATPS) that catalyzes the adenylation of sulfate producing adenosine 5'-phosphosulfate (APS) and diphosphate, the first enzymatic step in sulfur assimilation pathway. APS synthesis involves the formation of a high-energy phosphoric-sulfuric acid anhydride bond driven by GTP hydrolysis by CysN coupled to ATP hydrolysis by CysD. The chain is Sulfate adenylyltransferase subunit 2 from Mycobacterium sp. (strain KMS).